A 380-amino-acid chain; its full sequence is Flap endonuclease 1-A (380 aa).

Positions 1–105 (MGIKGLTKLL…EELAKRFSKR (105 aa)) are N-domain. Aspartate 34 lines the Mg(2+) pocket. Arginine 71 is a DNA binding site. 5 residues coordinate Mg(2+): aspartate 87, glutamate 159, glutamate 161, aspartate 180, and aspartate 182. The segment at 123–254 (AVEKLSKRTV…QTALKLIRQH (132 aa)) is I-domain. Residue glutamate 159 participates in DNA binding. Residues glycine 232 and aspartate 234 each coordinate DNA. Residue aspartate 234 coordinates Mg(2+). The segment at 336 to 344 (SQGRLESFF) is interaction with PCNA. The segment at 351–380 (SAPLKRKETSDKTSKAAAANKKTKAGGKKK) is disordered. Residues 355–364 (KRKETSDKTS) show a composition bias toward basic and acidic residues. The span at 371 to 380 (KKTKAGGKKK) shows a compositional bias: basic residues.

It belongs to the XPG/RAD2 endonuclease family. FEN1 subfamily. As to quaternary structure, interacts with PCNA. Three molecules of FEN1 bind to one PCNA trimer with each molecule binding to one PCNA monomer. PCNA stimulates the nuclease activity without altering cleavage specificity. Mg(2+) serves as cofactor. In terms of processing, phosphorylated. Phosphorylation upon DNA damage induces relocalization to the nuclear plasma.

The protein resides in the nucleus. The protein localises to the nucleolus. It localises to the nucleoplasm. It is found in the mitochondrion. Its function is as follows. Structure-specific nuclease with 5'-flap endonuclease and 5'-3' exonuclease activities involved in DNA replication and repair. During DNA replication, cleaves the 5'-overhanging flap structure that is generated by displacement synthesis when DNA polymerase encounters the 5'-end of a downstream Okazaki fragment. It enters the flap from the 5'-end and then tracks to cleave the flap base, leaving a nick for ligation. Also involved in the long patch base excision repair (LP-BER) pathway, by cleaving within the apurinic/apyrimidinic (AP) site-terminated flap. Acts as a genome stabilization factor that prevents flaps from equilibrating into structures that lead to duplications and deletions. Also possesses 5'-3' exonuclease activity on nicked or gapped double-stranded DNA, and exhibits RNase H activity. Also involved in replication and repair of rDNA and in repairing mitochondrial DNA. The sequence is that of Flap endonuclease 1-A from Sorghum bicolor (Sorghum).